The primary structure comprises 443 residues: Protein FAM83A (443 aa).

The segment at 311–403 (DSGVSVMTDS…YYQRNYAPDS (93 aa)) is disordered. A compositionally biased stretch (polar residues) spans 315–326 (SVMTDSTPESVN). Composition is skewed to low complexity over residues 327–344 (TTSEPFSSTSTASISNDS) and 388–399 (SNYQPNYYQRNY).

This sequence belongs to the FAM83 family.

It localises to the cytoplasm. Functionally, may function in the epidermal growth factor receptor/EGFR signaling pathway. The chain is Protein FAM83A from Xenopus laevis (African clawed frog).